Here is a 427-residue protein sequence, read N- to C-terminus: Sensor histidine kinase ArsS (427 aa).

The next 2 membrane-spanning stretches (helical) occupy residues F3 to F23 and N131 to L151. An HAMP domain is found at L151–E203. The region spanning S211–I398 is the Histidine kinase domain. H214 carries the post-translational modification Phosphohistidine; by autocatalysis.

In terms of processing, autophosphorylated.

The protein resides in the membrane. The catalysed reaction is ATP + protein L-histidine = ADP + protein N-phospho-L-histidine.. In terms of biological role, member of the two-component regulatory system ArsS/ArsR that regulates genes involved in biofilm formation and acid adaptation by acting on major ammonia-producing pathways. Functions as a sensor protein kinase which is autophosphorylated at a histidine residue and transfers its phosphate group to the conserved aspartic acid residue in the regulatory domain of ArsR. In turn, ArsR binds to the upstream promoter regions of target genes including ureA, amiE and amiF to positively regulate their expression in response to acidic pH. Also participates in acidic acclimatation in a phosphorylation-independent pathway by regulating acid-induced trafficking of urease and its accessory proteins to the inner membrane. This Helicobacter pylori (strain ATCC 700392 / 26695) (Campylobacter pylori) protein is Sensor histidine kinase ArsS.